A 622-amino-acid polypeptide reads, in one-letter code: Mitochondrial distribution and morphology protein 34 (622 aa).

Positions 1–195 constitute an SMP-LTD domain; it reads MAFNFNWSPL…LPAIIHRLSL (195 aa). 6 disordered regions span residues 211-234, 303-322, 355-432, 445-464, 482-546, and 581-622; these read QVTN…DPVD, PSGL…SHVA, SMGA…IRQP, ERNA…PASR, SLQQ…QTHL, and KMGG…AYRH. Over residues 214 to 225 the composition is skewed to low complexity; that stretch reads NPPLEGPGLDPL. The segment covering 360–372 has biased composition (basic residues); it reads RHSKAHARKRKKR. A compositionally biased stretch (basic and acidic residues) spans 373-384; sequence VVDLRRRPKNTD. The span at 388–404 shows a compositional bias: low complexity; the sequence is SVSGESEFTESTSAASV. Polar residues-rich tracts occupy residues 482-495 and 522-532; these read SLQQ…SKSL and NASNYTSSGDS. 2 stretches are compositionally biased toward low complexity: residues 533–543 and 592–601; these read QQQQQQQQQHQ and NNKNDNKNNN.

It belongs to the MDM34 family. Component of the ER-mitochondria encounter structure (ERMES) or MDM complex, composed of MMM1, MDM10, MDM12 and MDM34.

The protein resides in the mitochondrion outer membrane. Its function is as follows. Component of the ERMES/MDM complex, which serves as a molecular tether to connect the endoplasmic reticulum (ER) and mitochondria. Components of this complex are involved in the control of mitochondrial shape and protein biogenesis, and function in nonvesicular lipid trafficking between the ER and mitochondria. MDM34 is required for the interaction of the ER-resident membrane protein MMM1 and the outer mitochondrial membrane-resident beta-barrel protein MDM10. The sequence is that of Mitochondrial distribution and morphology protein 34 from Ajellomyces capsulatus (strain G186AR / H82 / ATCC MYA-2454 / RMSCC 2432) (Darling's disease fungus).